A 198-amino-acid chain; its full sequence is Transcription factor FapR (198 aa).

Residues 102-168 (TRIARGHHLF…GRTVVDVNSY (67 aa)) form the MaoC-like domain.

This sequence belongs to the FapR family.

In terms of biological role, transcriptional factor involved in regulation of membrane lipid biosynthesis by repressing genes involved in fatty acid and phospholipid metabolism. The protein is Transcription factor FapR of Geobacillus thermodenitrificans (strain NG80-2).